The chain runs to 372 residues: Cytochrome b (372 aa).

The next 4 helical transmembrane spans lie at 25-45, 69-90, 105-125, and 170-190; these read FGSM…FLAI, WIMQ…YTHI, WLSG…GYVL, and FFAL…VHII. Histidine 75 and histidine 89 together coordinate heme b. Residues histidine 174 and histidine 188 each contribute to the heme b site. Residue histidine 193 participates in a ubiquinone binding. The next 4 helical transmembrane spans lie at 218 to 238, 280 to 300, 312 to 332, and 339 to 358; these read YKDM…LSFS, LGGT…PFTH, LSQI…WTAS, and FITI…ILTP.

Belongs to the cytochrome b family. As to quaternary structure, the cytochrome bc1 complex contains 3 respiratory subunits (MT-CYB, CYC1 and UQCRFS1), 2 core proteins (UQCRC1 and UQCRC2) and probably 6 low-molecular weight proteins. The cofactor is heme b.

It localises to the mitochondrion inner membrane. Functionally, component of the ubiquinol-cytochrome c reductase complex (complex III or cytochrome b-c1 complex) that is part of the mitochondrial respiratory chain. The b-c1 complex mediates electron transfer from ubiquinol to cytochrome c. Contributes to the generation of a proton gradient across the mitochondrial membrane that is then used for ATP synthesis. The sequence is that of Cytochrome b (MT-CYB) from Naja kaouthia (Monocled cobra).